The chain runs to 273 residues: 2-dehydro-3-deoxyphosphooctonate aldolase (273 aa).

It belongs to the KdsA family.

Its subcellular location is the cytoplasm. The enzyme catalyses D-arabinose 5-phosphate + phosphoenolpyruvate + H2O = 3-deoxy-alpha-D-manno-2-octulosonate-8-phosphate + phosphate. It participates in carbohydrate biosynthesis; 3-deoxy-D-manno-octulosonate biosynthesis; 3-deoxy-D-manno-octulosonate from D-ribulose 5-phosphate: step 2/3. Its pathway is bacterial outer membrane biogenesis; lipopolysaccharide biosynthesis. This chain is 2-dehydro-3-deoxyphosphooctonate aldolase, found in Nitratidesulfovibrio vulgaris (strain DP4) (Desulfovibrio vulgaris).